The chain runs to 470 residues: MKNPLWGGRFTVSPSDIMKKINESISFDKILYEEDISGSIAHCKMLVNQKIISKYEGQLIIHGLEVIQNQISSGTFEFSTDLEDIHMNIEHHLKKMIGNIAGKLHTARSRNDQVATDFKLWIRKSIVKLETLLHELQQTILNIAEANYDTIMPGFTHLQIAQPVTLGHHLMAYFEMLKRDCSRWQDLHKRMNQCPAGSAALAGTSFPIDRHFIAQELKFDSPTENSIDAVSDRDYVIEFLSNASICIMHLSRLAEEIILWCSYNFKFITLSDNITTGSSIMPQKKNPDAAELIRGKTGRIFASLNQILVVMKGLPLAYSKDMQEDKEPVFDAANNLMLCIEAMNSMLNNITINKSNMLKAAEHDYSTATDLADWLVKNLNLSFRESHETTGQIVKLAEQNHCKLHELTLEQMKTIIPSITEDVFSILSVKNSVDSRTSYGGTAPANVIEAIKRGKLYLSNITTLHSENNM.

It belongs to the lyase 1 family. Argininosuccinate lyase subfamily.

Its subcellular location is the cytoplasm. The enzyme catalyses 2-(N(omega)-L-arginino)succinate = fumarate + L-arginine. It participates in amino-acid biosynthesis; L-arginine biosynthesis; L-arginine from L-ornithine and carbamoyl phosphate: step 3/3. The sequence is that of Argininosuccinate lyase from Ehrlichia chaffeensis (strain ATCC CRL-10679 / Arkansas).